The primary structure comprises 577 residues: Chaperonin CPN60, mitochondrial (577 aa).

The transit peptide at 1–31 directs the protein to the mitochondrion; it reads MYRFASNLASKARIAQNARQVSSRMSWSRNY. A Phosphoserine modification is found at Ser151.

It belongs to the chaperonin (HSP60) family.

Its subcellular location is the mitochondrion. In terms of biological role, implicated in mitochondrial protein import and macromolecular assembly. May facilitate the correct folding of imported proteins. May also prevent misfolding and promote the refolding and proper assembly of unfolded polypeptides generated under stress conditions in the mitochondrial matrix. In Arabidopsis thaliana (Mouse-ear cress), this protein is Chaperonin CPN60, mitochondrial (CPN60).